Here is a 538-residue protein sequence, read N- to C-terminus: Cryptic outer membrane porin BglH (538 aa).

Positions 1–25 are cleaved as a signal peptide; that stretch reads MFRRNLITSAILLMAPLAFSAQSLA. The interval 52 to 82 is disordered; sequence KDEEKKKYTPATVNRSVSTNDQGYAANPFPT. Polar residues predominate over residues 62–73; it reads ATVNRSVSTNDQ.

The protein belongs to the porin LamB (TC 1.B.3) family. As to quaternary structure, homomonomer; no physical evidence of a homotrimer has been found, however conductance experiments suggest it may be a homotrimer. The monomer probably consists of 18 antiparallel beta-strands.

It is found in the cell outer membrane. In terms of biological role, part of a cryptic operon that is poorly expressed in vivo. May be an ancestral sugar porin with a broad carbohydrate specificity; it binds aromatic beta-D-glucosides such as arbutin and salicin, but with low affinity compared to the binding of maltooligosaccharides to the LamB porin. This chain is Cryptic outer membrane porin BglH (bglH), found in Escherichia coli (strain K12).